The chain runs to 109 residues: Small ribosomal subunit protein bS20 (109 aa).

Positions 1–26 (MANIKSAKKRAIQSEKRRKHNASRRS) are disordered.

Belongs to the bacterial ribosomal protein bS20 family.

In terms of biological role, binds directly to 16S ribosomal RNA. The sequence is that of Small ribosomal subunit protein bS20 from Hamiltonella defensa subsp. Acyrthosiphon pisum (strain 5AT).